The sequence spans 554 residues: Muellerian-inhibiting factor (554 aa).

Positions 1–24 (MQGPHLSPLVLLLATMGAVLQPEA) are cleaved as a signal peptide. Positions 25–446 (VENLATNTRG…GREGRGRTGR (422 aa)) are excised as a propeptide. 3 N-linked (GlcNAc...) asparagine glycosylation sites follow: N62, N326, and N410. 3 cysteine pairs are disulfide-bonded: C456-C520, C482-C551, and C486-C553.

Belongs to the TGF-beta family. Homodimer; disulfide-linked. Post-translationally, preproprotein is proteolytically processed to generate N- and C-terminal cleavage products that homodimerize and associate to form a biologically active non-covalent complex. Binding of the non-covalent complex to AMHRII induces dissociation of the pro-region from the mature C-terminal dimer. The N-terminal portion of the protein, despite having no intrinsic activity, has the role of amplifying the activity of the C-terminus. In terms of tissue distribution, expressed in Sertoli cells of fetal testes, and in testes just after birth, but absent in adult testes. In female, AMH is expressed after birth in the granulosa cells of the follicle.

It is found in the secreted. In terms of biological role, plays an important role in several reproductive functions, including Muellerian duct regression during male fetal sexua,l differentiation and in the adult plays a role in Leydig cell differentiation and function. In female acts as a negative regulator of the primordial to primary follicle transition and decreases FSH sensitivity of growing follicles. Binds to its sole type II receptor, AMHR2 that recruits type I receptors ACVR1 and BMPR1A which subsequently activates the Smad pathway. The protein is Muellerian-inhibiting factor (Amh) of Mus musculus (Mouse).